Consider the following 201-residue polypeptide: 3-isopropylmalate dehydratase small subunit (201 aa).

Belongs to the LeuD family. LeuD type 1 subfamily. In terms of assembly, heterodimer of LeuC and LeuD.

The enzyme catalyses (2R,3S)-3-isopropylmalate = (2S)-2-isopropylmalate. The protein operates within amino-acid biosynthesis; L-leucine biosynthesis; L-leucine from 3-methyl-2-oxobutanoate: step 2/4. Its function is as follows. Catalyzes the isomerization between 2-isopropylmalate and 3-isopropylmalate, via the formation of 2-isopropylmaleate. This Rhizobium meliloti (strain 1021) (Ensifer meliloti) protein is 3-isopropylmalate dehydratase small subunit.